The following is a 73-amino-acid chain: UPF0435 protein BH2488 (73 aa).

Belongs to the UPF0435 family.

This chain is UPF0435 protein BH2488, found in Halalkalibacterium halodurans (strain ATCC BAA-125 / DSM 18197 / FERM 7344 / JCM 9153 / C-125) (Bacillus halodurans).